Reading from the N-terminus, the 210-residue chain is S-norcoclaurine synthase (210 aa).

The N-terminal stretch at 1-19 (MMKMEVVFVFLMLLGTINC) is a signal peptide. 108–110 (YKE) contributes to the dopamine binding site. Residue Lys122 is the Proton donor of the active site. Residue Asp141 coordinates (4-hydroxyphenyl)acetaldehyde.

The protein belongs to the BetVI family. Concentration-dependent dimerization, but mainly monomeric at concentrations around 10 uM. As to expression, expressed most abundantly in the rhizomes and to a lesser extent in petioles, roots, leaves and flower buds.

It catalyses the reaction (4-hydroxyphenyl)acetaldehyde + dopamine = (S)-norcoclaurine + H2O. Involved in the biosynthesis of the common precursor of all benzylisoquinoline alkaloids such as morphine, sanguinarine, codeine or berberine. Condenses dopamine and 4-hydroxyphenylacetaldehyde. The sequence is that of S-norcoclaurine synthase from Thalictrum flavum subsp. glaucum (Yellow meadow rue).